The following is a 273-amino-acid chain: Putative cysteine-rich repeat secretory protein 40 (273 aa).

Positions 1–32 (MYPSCSLLQRLVWFPFLALVATQLLFIRNVSS) are cleaved as a signal peptide. Gnk2-homologous domains lie at 39-141 (YLHH…SISV) and 151-264 (YENN…LYPF).

It belongs to the cysteine-rich repeat secretory protein family.

The protein localises to the secreted. This is Putative cysteine-rich repeat secretory protein 40 (CRRSP40) from Arabidopsis thaliana (Mouse-ear cress).